A 189-amino-acid chain; its full sequence is Dual-action ribosomal maturation protein DarP (189 aa).

A disordered region spans residues 1-22 (MWKNGAMRGCNKETGEFLGPSR).

This sequence belongs to the DarP family.

It localises to the cytoplasm. Functionally, member of a network of 50S ribosomal subunit biogenesis factors which assembles along the 30S-50S interface, preventing incorrect 23S rRNA structures from forming. Promotes peptidyl transferase center (PTC) maturation. This Xylella fastidiosa (strain Temecula1 / ATCC 700964) protein is Dual-action ribosomal maturation protein DarP.